We begin with the raw amino-acid sequence, 776 residues long: Ribosomal RNA large subunit methyltransferase K/L (776 aa).

The THUMP domain maps to 68–183 (DLYKICLWSR…DKQAELYLDL (116 aa)).

The protein belongs to the methyltransferase superfamily. RlmKL family.

Its subcellular location is the cytoplasm. It carries out the reaction guanosine(2445) in 23S rRNA + S-adenosyl-L-methionine = N(2)-methylguanosine(2445) in 23S rRNA + S-adenosyl-L-homocysteine + H(+). It catalyses the reaction guanosine(2069) in 23S rRNA + S-adenosyl-L-methionine = N(2)-methylguanosine(2069) in 23S rRNA + S-adenosyl-L-homocysteine + H(+). Specifically methylates the guanine in position 2445 (m2G2445) and the guanine in position 2069 (m7G2069) of 23S rRNA. The chain is Ribosomal RNA large subunit methyltransferase K/L from Psychrobacter cryohalolentis (strain ATCC BAA-1226 / DSM 17306 / VKM B-2378 / K5).